The chain runs to 123 residues: Large ribosomal subunit protein bL19 (123 aa).

The protein belongs to the bacterial ribosomal protein bL19 family.

Functionally, this protein is located at the 30S-50S ribosomal subunit interface and may play a role in the structure and function of the aminoacyl-tRNA binding site. The chain is Large ribosomal subunit protein bL19 from Ureaplasma parvum serovar 3 (strain ATCC 27815 / 27 / NCTC 11736).